Consider the following 272-residue polypeptide: Secretagogin (272 aa).

6 EF-hand domains span residues Leu-8–Lys-43, Glu-53–Asn-89, Asp-101–Gln-136, Lys-145–Phe-180, Glu-193–Leu-228, and Asp-237–Pro-272. 5 residues coordinate Ca(2+): Asp-21, Asp-23, Asn-25, Tyr-27, and Glu-32. Residues Asp-114, Asp-116, Ser-118, Tyr-120, Glu-125, Asp-158, Asn-160, Asp-162, Arg-164, Asp-169, Asp-206, Ser-208, Thr-210, Glu-217, Asp-250, Asn-252, Asp-254, Lys-256, and Glu-261 each contribute to the Ca(2+) site.

It localises to the cytoplasm. This Danio rerio (Zebrafish) protein is Secretagogin (scgn).